A 365-amino-acid polypeptide reads, in one-letter code: 3-isopropylmalate dehydrogenase (365 aa).

80–91 (GPKWGTGAVRPE) provides a ligand contact to NAD(+). Residues Arg-98, Arg-108, Arg-137, and Asp-226 each coordinate substrate. The Mg(2+) site is built by Asp-226, Asp-251, and Asp-255. An NAD(+)-binding site is contributed by 290-301 (GSAPDLPKGKVN).

Belongs to the isocitrate and isopropylmalate dehydrogenases family. Homodimer. Mg(2+) is required as a cofactor. Requires Mn(2+) as cofactor.

It is found in the cytoplasm. It carries out the reaction (2R,3S)-3-isopropylmalate + NAD(+) = 4-methyl-2-oxopentanoate + CO2 + NADH. It functions in the pathway amino-acid biosynthesis; L-leucine biosynthesis; L-leucine from 3-methyl-2-oxobutanoate: step 3/4. In terms of biological role, catalyzes the oxidation of 3-carboxy-2-hydroxy-4-methylpentanoate (3-isopropylmalate) to 3-carboxy-4-methyl-2-oxopentanoate. The product decarboxylates to 4-methyl-2 oxopentanoate. The chain is 3-isopropylmalate dehydrogenase (LEU2) from Candida glabrata (strain ATCC 2001 / BCRC 20586 / JCM 3761 / NBRC 0622 / NRRL Y-65 / CBS 138) (Yeast).